A 1255-amino-acid chain; its full sequence is Stress response protein NST1 (1255 aa).

The span at 1 to 19 shows a compositional bias: pro residues; it reads MKGNRNPPPPPSGPVPPSP. Disordered regions lie at residues 1-214, 285-379, 470-525, 563-898, and 956-1080; these read MKGN…SQEE, NHPN…SEEL, RAYD…RMEE, EAEN…PPMG, and HPPP…PPFG. The span at 50 to 61 shows a compositional bias: low complexity; it reads PSPTASSLAAKP. Positions 76 to 86 are enriched in basic residues; it reads NRKKQKRRAKA. The span at 87 to 96 shows a compositional bias: low complexity; that stretch reads AAKAAAERAQ. The span at 118-127 shows a compositional bias: acidic residues; sequence ADPEDDEDEP. A compositionally biased stretch (basic residues) spans 151-162; the sequence is KSKKSKKKKKKN. The span at 187–196 shows a compositional bias: pro residues; the sequence is PILPPPPPQQ. Over residues 201-214 the composition is skewed to basic and acidic residues; the sequence is MSREKIWNTNSQEE. Acidic residues predominate over residues 330–376; that stretch reads ELEGDEEEEEVEAEAEDDGEGDEEGEDVYSEDELEDDMYSEEEQEPS. Residues 470-481 show a composition bias toward basic and acidic residues; that stretch reads RAYDHPNGERYV. A compositionally biased stretch (acidic residues) spans 488-518; it reads PDEEEFEDEEEEYEEDDEEEYNSPDEEDTMT. Residues 547–745 adopt a coiled-coil conformation; sequence REKVAKERQA…ERRKKEERAA (199 aa). 2 stretches are compositionally biased toward basic and acidic residues: residues 590 to 630 and 637 to 745; these read KKEA…AEEK and QRKA…ERAA. Pro residues predominate over residues 770-780; that stretch reads PPAPPVAPVPV. The span at 811-835 shows a compositional bias: low complexity; the sequence is QTSQQDGSTASSGAASNSGSMASQN. 2 stretches are compositionally biased toward polar residues: residues 865–877 and 983–1004; these read QGSA…SASP and RDNQ…QPIS. Residues 1067 to 1080 are compositionally biased toward pro residues; sequence GPRPAPGFPMPPFG.

The protein belongs to the NST1 family.

The protein resides in the cytoplasm. May act as a negative regulator of salt tolerance. This is Stress response protein NST1 (NST1) from Chaetomium globosum (strain ATCC 6205 / CBS 148.51 / DSM 1962 / NBRC 6347 / NRRL 1970) (Soil fungus).